Consider the following 203-residue polypeptide: tRNA (guanine-N(7)-)-methyltransferase (203 aa).

E34, E59, D86, and D107 together coordinate S-adenosyl-L-methionine. Residue D107 is part of the active site. Substrate-binding positions include K111, D143, and 181-184 (TSYE).

Belongs to the class I-like SAM-binding methyltransferase superfamily. TrmB family.

It carries out the reaction guanosine(46) in tRNA + S-adenosyl-L-methionine = N(7)-methylguanosine(46) in tRNA + S-adenosyl-L-homocysteine. The protein operates within tRNA modification; N(7)-methylguanine-tRNA biosynthesis. Functionally, catalyzes the formation of N(7)-methylguanine at position 46 (m7G46) in tRNA. The chain is tRNA (guanine-N(7)-)-methyltransferase from Mycoplasmopsis pulmonis (strain UAB CTIP) (Mycoplasma pulmonis).